A 23-amino-acid chain; its full sequence is Coenzyme PQQ synthesis protein A (23 aa).

Positions 15–19 (EVTLY) form a cross-link, pyrroloquinoline quinone (Glu-Tyr).

It belongs to the PqqA family.

Its pathway is cofactor biosynthesis; pyrroloquinoline quinone biosynthesis. Functionally, required for coenzyme pyrroloquinoline quinone (PQQ) biosynthesis. PQQ is probably formed by cross-linking a specific glutamate to a specific tyrosine residue and excising these residues from the peptide. The polypeptide is Coenzyme PQQ synthesis protein A (Klebsiella pneumoniae (strain 342)).